The sequence spans 1361 residues: Xanthine dehydrogenase 1 (1361 aa).

The 2Fe-2S ferredoxin-type domain maps to 15–101; it reads TEALLYVNGV…GMHVISIEGL (87 aa). Positions 53, 58, 61, 83, 123, 126, 159, and 161 each coordinate [2Fe-2S] cluster. An FAD-binding PCMH-type domain is found at 257 to 442; sequence RGNGGITWYR…LSVFLPWTRP (186 aa). FAD is bound by residues 285-292, Phe365, 375-379, Asp388, Leu432, and Lys450; these read LLVGNTEV and CIGGN. Residues Gln796 and Phe827 each contribute to the Mo-molybdopterin site. The substrate site is built by Glu831 and Arg909. Arg941 serves as a coordination point for Mo-molybdopterin. Residues Phe943 and Thr1039 each coordinate substrate. Ala1108 is a Mo-molybdopterin binding site. Catalysis depends on Glu1297, which acts as the Proton acceptor.

This sequence belongs to the xanthine dehydrogenase family. In terms of assembly, homodimer. Requires [2Fe-2S] cluster as cofactor. FAD serves as cofactor. It depends on Mo-molybdopterin as a cofactor. As to expression, expressed in roots, leaves, stems, flowers and siliques.

The enzyme catalyses xanthine + NAD(+) + H2O = urate + NADH + H(+). It carries out the reaction hypoxanthine + NAD(+) + H2O = xanthine + NADH + H(+). Functionally, key enzyme involved in purine catabolism. Catalyzes the oxidation of hypoxanthine to xanthine and the oxidation of xanthine to urate. Regulates the level of ureides and plays an important role during plant growth and development, senescence and response to stresses. Possesses NADH oxidase activity and may contribute to the generation of superoxide anions in planta. The chain is Xanthine dehydrogenase 1 (XDH1) from Arabidopsis thaliana (Mouse-ear cress).